We begin with the raw amino-acid sequence, 2231 residues long: Helicase SEN1 (2231 aa).

Positions 1-17 are enriched in low complexity; the sequence is MNSNNPDNNNSNNINNN. 2 disordered regions span residues 1-24 and 1032-1061; these read MNSNNPDNNNSNNINNNNKDKDIA and HPPSAPAFHTKSRGLSNKNDDSSSEESDND. ATP-binding positions include Gln1339 and 1360 to 1364; that span reads GTGKT. The disordered stretch occupies residues 1491-1511; the sequence is ELRGKLDSESGNPESPMSTED. The span at 1499 to 1510 shows a compositional bias: polar residues; sequence ESGNPESPMSTE. Positions 1619, 1655, and 1787 each coordinate ATP. Disordered stretches follow at residues 1894-1993 and 2032-2231; these read ITQG…AVVG and QLGL…KPRS. The Nuclear localization signal signature appears at 1909–1927; it reads KRRVVDEGEEADKAVKKKK. Basic residues predominate over residues 1923–1937; sequence VKKKKKEKKKEKKKS. The segment covering 1938–1950 has biased composition (basic and acidic residues); the sequence is KADDKKKNNKKAE. Positions 2048-2058 are enriched in acidic residues; the sequence is NNEDDDDEDDY. Composition is skewed to polar residues over residues 2060 to 2088 and 2095 to 2104; these read PSISDSSLMKSEANGRNNRVASHNQNFSA and QVSQAKQTQV. Residues 2114–2123 show a composition bias toward low complexity; it reads SNSVLSGGSS. The span at 2134–2160 shows a compositional bias: polar residues; that stretch reads PNQNGQNGANRTLSQHVGNANQYSTAP. Residues 2210–2220 show a composition bias toward low complexity; the sequence is RNSSRRNASSS.

The protein belongs to the DNA2/NAM7 helicase family. As to quaternary structure, interacts with RAD2, RNT1 and RPB1. Binds to multiple snoRNAs.

It localises to the nucleus. Functionally, ATP-dependent 5'-&gt;3' DNA/RNA helicase required for the expression and maturation of diverse classes of non-protein-coding RNAs like precursor tRNAs, rRNAs and small nuclear (snRNA) and nucleolar (snoRNA) RNAs. Directs RNA polymerase II transcription termination on snoRNAs as well as on several short protein-coding genes. May also play a role in transcription-coupled nucleotide excision repair. This is Helicase SEN1 (SEN1) from Saccharomyces cerevisiae (strain ATCC 204508 / S288c) (Baker's yeast).